Here is a 467-residue protein sequence, read N- to C-terminus: MLKIYDTLTRSRREFIPLTPGKVKMYVCGMTVYDHCHLGHARVLVVFDSVVRWLQTLDYEVTYVRNITDIDDKIIRRALENHEPFGALTARYIQAMEEDAAALGIISPSFEPRATECIESMVTMIESLLSKGLAYVANNGDVFYDVRRFPGYGKLSGKSLDDLRAGERVEIDTNKRDPLDFVLWKAAKPDEPSWDSPWGKGRPGWHIECSAMSGHYLGERFDIHGGGQDLQFPHHENEIAQSEGVHGHPHVNYWMHNGFVRVDNEKMSKSLGNFFTVREVLARYQPEVVRFFIVRAHYRSPLNYSDAHLNDARNALERLYTALKNHAPSQAQAAEEATATIDWVNDGYAQRFMAAMNDDFNTPEAVAVLFDLASEANRTGNSHYASLLKALGGILGLLQQSPRQYLQHPAHPQNDHHSIEEIERMIQQRLQARKEKNFAQADALRQQLAEAGIILEDGPQGTTWRRQ.

C28 is a Zn(2+) binding site. Residues 30 to 40 (MTVYDHCHLGH) carry the 'HIGH' region motif. Residues C209, H234, and E238 each coordinate Zn(2+). The 'KMSKS' region motif lies at 266 to 270 (KMSKS). K269 lines the ATP pocket.

The protein belongs to the class-I aminoacyl-tRNA synthetase family. In terms of assembly, monomer. Zn(2+) serves as cofactor.

The protein localises to the cytoplasm. The catalysed reaction is tRNA(Cys) + L-cysteine + ATP = L-cysteinyl-tRNA(Cys) + AMP + diphosphate. This is Cysteine--tRNA ligase from Nitrosomonas eutropha (strain DSM 101675 / C91 / Nm57).